A 776-amino-acid chain; its full sequence is A-type ATP synthase subunit A (776 aa).

This sequence belongs to the ATPase alpha/beta chains family. Has multiple subunits with at least A(3), B(3), C, D, E, F, H, I and proteolipid K(x). This protein undergoes a protein self splicing that involves a post-translational excision of the VDE intervening region (intein) followed by peptide ligation.

It localises to the cell membrane. The enzyme catalyses ATP + H2O + 4 H(+)(in) = ADP + phosphate + 5 H(+)(out). Component of the A-type ATP synthase that produces ATP from ADP in the presence of a proton gradient across the membrane. The A chain is the catalytic subunit. The sequence is that of A-type ATP synthase subunit A from Thermoplasma volcanium (strain ATCC 51530 / DSM 4299 / JCM 9571 / NBRC 15438 / GSS1).